We begin with the raw amino-acid sequence, 617 residues long: KIF-binding protein (617 aa).

A disordered region spans residues 48–83; sequence ALLGPAPEDDDERAADDGPVDQALGAGEPRDAEGPG. Position 174 is a phosphoserine (serine 174).

This sequence belongs to the KIF-binding protein family. As to quaternary structure, interacts with KIF1B; positively regulates KIF1B microtubule motor activity. Interacts with STMN2.

The protein localises to the cytoplasm. It localises to the cytoskeleton. Functionally, activator of KIF1B plus-end-directed microtubule motor activity. Required for organization of axonal microtubules, and axonal outgrowth and maintenance during peripheral and central nervous system development. The chain is KIF-binding protein (Kifbp) from Rattus norvegicus (Rat).